Here is a 344-residue protein sequence, read N- to C-terminus: Acireductone dioxygenase (344 aa).

Fe(2+)-binding residues include histidine 92, histidine 94, glutamate 98, and histidine 137. 4 residues coordinate Ni(2+): histidine 92, histidine 94, glutamate 98, and histidine 137.

This sequence belongs to the acireductone dioxygenase (ARD) family. It depends on Fe(2+) as a cofactor. Requires Ni(2+) as cofactor.

The protein resides in the cytoplasm. The protein localises to the nucleus. It carries out the reaction 1,2-dihydroxy-5-(methylsulfanyl)pent-1-en-3-one + O2 = 4-methylsulfanyl-2-oxobutanoate + formate + 2 H(+). The enzyme catalyses 1,2-dihydroxy-5-(methylsulfanyl)pent-1-en-3-one + O2 = 3-(methylsulfanyl)propanoate + CO + formate + 2 H(+). Its pathway is amino-acid biosynthesis; L-methionine biosynthesis via salvage pathway; L-methionine from S-methyl-5-thio-alpha-D-ribose 1-phosphate: step 5/6. In terms of biological role, catalyzes 2 different reactions between oxygen and the acireductone 1,2-dihydroxy-3-keto-5-methylthiopentene (DHK-MTPene) depending upon the metal bound in the active site. Fe-containing acireductone dioxygenase (Fe-ARD) produces formate and 2-keto-4-methylthiobutyrate (KMTB), the alpha-ketoacid precursor of methionine in the methionine recycle pathway. Ni-containing acireductone dioxygenase (Ni-ARD) produces methylthiopropionate, carbon monoxide and formate, and does not lie on the methionine recycle pathway. The chain is Acireductone dioxygenase from Leishmania infantum.